Consider the following 179-residue polypeptide: ATP synthase subunit delta (179 aa).

Belongs to the ATPase delta chain family. In terms of assembly, F-type ATPases have 2 components, F(1) - the catalytic core - and F(0) - the membrane proton channel. F(1) has five subunits: alpha(3), beta(3), gamma(1), delta(1), epsilon(1). F(0) has three main subunits: a(1), b(2) and c(10-14). The alpha and beta chains form an alternating ring which encloses part of the gamma chain. F(1) is attached to F(0) by a central stalk formed by the gamma and epsilon chains, while a peripheral stalk is formed by the delta and b chains.

The protein resides in the cell inner membrane. In terms of biological role, f(1)F(0) ATP synthase produces ATP from ADP in the presence of a proton or sodium gradient. F-type ATPases consist of two structural domains, F(1) containing the extramembraneous catalytic core and F(0) containing the membrane proton channel, linked together by a central stalk and a peripheral stalk. During catalysis, ATP synthesis in the catalytic domain of F(1) is coupled via a rotary mechanism of the central stalk subunits to proton translocation. Its function is as follows. This protein is part of the stalk that links CF(0) to CF(1). It either transmits conformational changes from CF(0) to CF(1) or is implicated in proton conduction. In Thermosipho melanesiensis (strain DSM 12029 / CIP 104789 / BI429), this protein is ATP synthase subunit delta.